A 399-amino-acid polypeptide reads, in one-letter code: S-adenosylmethionine synthase (399 aa).

ATP is bound at residue H19. D21 lines the Mg(2+) pocket. E47 contacts K(+). 2 residues coordinate L-methionine: E60 and Q103. The tract at residues Q103–Q113 is flexible loop. Residues D179–K181, R246–F247, D255, R261–K262, A278, and K282 each bind ATP. D255 lines the L-methionine pocket. K286 is an L-methionine binding site.

This sequence belongs to the AdoMet synthase family. As to quaternary structure, homotetramer; dimer of dimers. Mg(2+) is required as a cofactor. It depends on K(+) as a cofactor.

It localises to the cytoplasm. The enzyme catalyses L-methionine + ATP + H2O = S-adenosyl-L-methionine + phosphate + diphosphate. The protein operates within amino-acid biosynthesis; S-adenosyl-L-methionine biosynthesis; S-adenosyl-L-methionine from L-methionine: step 1/1. Catalyzes the formation of S-adenosylmethionine (AdoMet) from methionine and ATP. The overall synthetic reaction is composed of two sequential steps, AdoMet formation and the subsequent tripolyphosphate hydrolysis which occurs prior to release of AdoMet from the enzyme. This Halalkalibacterium halodurans (strain ATCC BAA-125 / DSM 18197 / FERM 7344 / JCM 9153 / C-125) (Bacillus halodurans) protein is S-adenosylmethionine synthase.